The primary structure comprises 152 residues: Biogenesis of lysosome-related organelles complex 1 subunit 1 (152 aa).

It belongs to the BLOC1S1 family. Component of the biogenesis of lysosome-related organelles complex-1 (BLOC-1). Interacts with BLOS2 and SNX1. As to expression, expressed in the whole plant (at protein level).

It is found in the cytoplasm. Its subcellular location is the endosome. Functionally, component of the biogenesis of lysosome-related organelles complex-1 (BLOC-1), a complex that mediates the vacuolar degradative transport via the intracellular vesicle trafficking from the endosome to the vacuole. Probably regulates the PIN1 and PIN2 homeostasis through its interaction with SNX1. The sequence is that of Biogenesis of lysosome-related organelles complex 1 subunit 1 (BLOS1) from Arabidopsis thaliana (Mouse-ear cress).